The chain runs to 430 residues: Maintenance of mitochondrial morphology protein 1 (430 aa).

Residues 1-70 (MSQGLIETTT…NGNTWSFTQG (70 aa)) lie on the Lumenal side of the membrane. A helical transmembrane segment spans residues 71–91 (LVIGQISVIFIIIVFVKFFVF). Residues 92 to 430 (ADSSSHIPTK…TPGEFVNSNI (339 aa)) lie on the Cytoplasmic side of the membrane. An SMP-LTD domain is found at 159-387 (ASESLDWFNV…EPRFQVVRLP (229 aa)). The disordered stretch occupies residues 305–326 (GYSKENGSADSASDNDEDEDDG). A compositionally biased stretch (acidic residues) spans 317-326 (SDNDEDEDDG).

It belongs to the MMM1 family. As to quaternary structure, homodimer. Component of the ER-mitochondria encounter structure (ERMES) or MDM complex, composed of MMM1, MDM10, MDM12 and MDM34. An MMM1 homodimer associates with one molecule of MDM12 on each side in a pairwise head-to-tail manner, and the SMP-LTD domains of MMM1 and MDM12 generate a continuous hydrophobic tunnel for phospholipid trafficking.

It localises to the endoplasmic reticulum membrane. Functionally, component of the ERMES/MDM complex, which serves as a molecular tether to connect the endoplasmic reticulum (ER) and mitochondria. Components of this complex are involved in the control of mitochondrial shape and protein biogenesis, and function in nonvesicular lipid trafficking between the ER and mitochondria. The MDM12-MMM1 subcomplex functions in the major beta-barrel assembly pathway that is responsible for biogenesis of all outer membrane beta-barrel proteins, and acts in a late step after the SAM complex. The MDM10-MDM12-MMM1 subcomplex further acts in the TOM40-specific pathway after the action of the MDM12-MMM1 complex. Essential for establishing and maintaining the structure of mitochondria and maintenance of mtDNA nucleoids. The chain is Maintenance of mitochondrial morphology protein 1 from Candida dubliniensis (strain CD36 / ATCC MYA-646 / CBS 7987 / NCPF 3949 / NRRL Y-17841) (Yeast).